A 130-amino-acid chain; its full sequence is MASSFWKGVVGIGLFALAHAAFSAAQHRSYMRLTEKENETLPIDIVLQTLLSFVITCYGIVHISGEFKDMDASSELKNKTFDTLRNHPSFYLFNHRGRVLFRTPEQEPSTPNAQALPSNPLRLRKLENFH.

Topologically, residues 1 to 3 (MAS) are cytoplasmic. The helical transmembrane segment at 4-22 (SFWKGVVGIGLFALAHAAF) threads the bilayer. The Lumenal portion of the chain corresponds to 23-43 (SAAQHRSYMRLTEKENETLPI). The chain crosses the membrane as a helical span at residues 44 to 63 (DIVLQTLLSFVITCYGIVHI). Over 64 to 130 (SGEFKDMDAS…LRLRKLENFH (67 aa)) the chain is Cytoplasmic.

Belongs to the membrane magnesium transporter (TC 1.A.67) family. As to quaternary structure, component of the ER membrane protein complex (EMC).

It localises to the endoplasmic reticulum membrane. Its subcellular location is the golgi apparatus membrane. The protein resides in the early endosome membrane. Its function is as follows. Part of the endoplasmic reticulum membrane protein complex (EMC) that enables the energy-independent insertion into endoplasmic reticulum membranes of newly synthesized membrane proteins. Preferentially accommodates proteins with transmembrane domains that are weakly hydrophobic or contain destabilizing features such as charged and aromatic residues. Involved in the cotranslational insertion of multi-pass membrane proteins in which stop-transfer membrane-anchor sequences become ER membrane spanning helices. It is also required for the post-translational insertion of tail-anchored/TA proteins in endoplasmic reticulum membranes. By mediating the proper cotranslational insertion of N-terminal transmembrane domains in an N-exo topology, with translocated N-terminus in the lumen of the ER, controls the topology of multi-pass membrane proteins like the G protein-coupled receptors. By regulating the insertion of various proteins in membranes, it is indirectly involved in many cellular processes. May be involved in Mg(2+) transport. In Danio rerio (Zebrafish), this protein is ER membrane protein complex subunit 5.